The primary structure comprises 753 residues: Synaptotagmin-like protein 5 (753 aa).

The region spanning 7–123 (FINLSFLLDH…IISGEWFLEE (117 aa)) is the RabBD domain. The FYVE-type zinc-finger motif lies at 64 to 106 (CVHCQKSLGLIFDRGAPCQACSLRVCSECRVTGLDGSWKCTVC). 3 disordered regions span residues 145–188 (RRSP…GFLL), 221–283 (SFKS…GFEN), and 298–359 (TKSH…LNSL). A Phosphoserine modification is found at S147. The span at 224 to 238 (SVSGSDRGSTTSSDL) shows a compositional bias: low complexity. Composition is skewed to polar residues over residues 260–275 (TQRS…TSIS) and 305–316 (TSGTPSIAVSGT). C2 domains follow at residues 429-550 (VTGE…DEWF) and 590-717 (PQGK…VDWM).

In terms of assembly, binds RAB27A that has been activated by GTP-binding.

Its subcellular location is the membrane. Its function is as follows. May act as Rab effector protein and play a role in vesicle trafficking. Binds phospholipids. In Rattus norvegicus (Rat), this protein is Synaptotagmin-like protein 5 (Sytl5).